Reading from the N-terminus, the 335-residue chain is MMSVNRFTSGRLPVFLRKSPFYYSRAYLHQTCVFKQNKETAQDSPELLAKSSHLNSKPLDVSNKAPVKTAQNKIPLAHSKYESSKYELPKWKEALGELVIRAFHLDMDRVRAGPVAGSYYYKICKEQGLQYEDEPLSETAKYFYEDLKLPRTFSQWFQITVLHEWILFVRMRAMPFKYGRNYQQKLVDRTFSDIELRLFEEMKVNSGRIADQYLKDFNTQLRGAIFAYDEGFATDDGTLATAVWRNLFGGRKNIDMVHLESVVRYIYSQLYVLSRLSDREFATGKFKFVPPGVKVEKLTPKQEEELKAKTIAKYEALDKDPKTLPSERSRLSYTN.

The transit peptide at 1 to 38 (MMSVNRFTSGRLPVFLRKSPFYYSRAYLHQTCVFKQNK) directs the protein to the mitochondrion. A helical membrane pass occupies residues 152–169 (TFSQWFQITVLHEWILFV).

Belongs to the CBP3 family.

The protein resides in the mitochondrion membrane. Its function is as follows. Chaperone required for the assembly of ubiquinol-cytochrome c reductase of the mitochondrial respiratory chain. The chain is Protein CBP3, mitochondrial (CBP3) from Saccharomyces cerevisiae (strain ATCC 204508 / S288c) (Baker's yeast).